Consider the following 151-residue polypeptide: Small ribosomal subunit protein bS6 (151 aa).

Residues 98–151 (EESPIQKAEKENRERKNRAERRAAEAAAATETEKSESEESAEEETSTDTTGEEE) are disordered. A compositionally biased stretch (acidic residues) spans 135 to 151 (EESAEEETSTDTTGEEE).

This sequence belongs to the bacterial ribosomal protein bS6 family.

Functionally, binds together with bS18 to 16S ribosomal RNA. The protein is Small ribosomal subunit protein bS6 of Teredinibacter turnerae (strain ATCC 39867 / T7901).